The chain runs to 417 residues: Acetate kinase (417 aa).

N9 lines the Mg(2+) pocket. Position 16 (K16) interacts with ATP. R90 lines the substrate pocket. D147 (proton donor/acceptor) is an active-site residue. Residues H207 to G211, D282 to R284, and G330 to N334 contribute to the ATP site. E384 lines the Mg(2+) pocket.

This sequence belongs to the acetokinase family. As to quaternary structure, homodimer. Mg(2+) is required as a cofactor. Mn(2+) serves as cofactor.

The protein resides in the cytoplasm. It catalyses the reaction acetate + ATP = acetyl phosphate + ADP. Its pathway is metabolic intermediate biosynthesis; acetyl-CoA biosynthesis; acetyl-CoA from acetate: step 1/2. Functionally, catalyzes the formation of acetyl phosphate from acetate and ATP. Can also catalyze the reverse reaction. This is Acetate kinase from Staphylococcus epidermidis (strain ATCC 35984 / DSM 28319 / BCRC 17069 / CCUG 31568 / BM 3577 / RP62A).